Here is a 284-residue protein sequence, read N- to C-terminus: 4-diphosphocytidyl-2-C-methyl-D-erythritol kinase (284 aa).

Lys-13 is a catalytic residue. 96–106 (PMGGGLGGGSS) provides a ligand contact to ATP. Asp-138 is an active-site residue.

The protein belongs to the GHMP kinase family. IspE subfamily.

The enzyme catalyses 4-CDP-2-C-methyl-D-erythritol + ATP = 4-CDP-2-C-methyl-D-erythritol 2-phosphate + ADP + H(+). The protein operates within isoprenoid biosynthesis; isopentenyl diphosphate biosynthesis via DXP pathway; isopentenyl diphosphate from 1-deoxy-D-xylulose 5-phosphate: step 3/6. In terms of biological role, catalyzes the phosphorylation of the position 2 hydroxy group of 4-diphosphocytidyl-2C-methyl-D-erythritol. The chain is 4-diphosphocytidyl-2-C-methyl-D-erythritol kinase from Chromobacterium violaceum (strain ATCC 12472 / DSM 30191 / JCM 1249 / CCUG 213 / NBRC 12614 / NCIMB 9131 / NCTC 9757 / MK).